Consider the following 484-residue polypeptide: Regulator of G-protein signaling 9 (484 aa).

The 76-residue stretch at 30-105 folds into the DEP domain; it reads PDTGVKTQSQ…PDSSLYRFQT (76 aa). In terms of domain architecture, G protein gamma spans 219–280; the sequence is ITAVKKEIMY…ITDDTQFWDL (62 aa). The RGS domain maps to 299–414; the sequence is NFSELIRDPK…LKSPIYKEML (116 aa).

In terms of assembly, heterodimer with Gbeta5. Interacts with RGS7BP, leading to regulate the subcellular location of the heterodimer formed with Gbeta5. Component of the RGS9-1-Gbeta5 complex composed of RGS9 (RGS9-1), Gbeta5 (GNB5) and RGS9BP. Phosphorylation is decreased by light exposition.

It localises to the membrane. Inhibits signal transduction by increasing the GTPase activity of G protein alpha subunits thereby driving them into their inactive GDP-bound form. Binds to G(t)-alpha. Involved in phototransduction; key element in the recovery phase of visual transduction. The chain is Regulator of G-protein signaling 9 from Tamias striatus (Eastern chipmunk).